A 285-amino-acid polypeptide reads, in one-letter code: Acetyl-coenzyme A carboxylase carboxyl transferase subunit beta (285 aa).

The region spanning 33–285 is the CoA carboxyltransferase N-terminal domain; it reads MWIKCSKCGK…TLGNILRMHS (253 aa). 4 residues coordinate Zn(2+): cysteine 37, cysteine 40, cysteine 56, and cysteine 59. The C4-type zinc finger occupies 37-59; the sequence is CSKCGKILYKSDVDDNFKVCPKC.

Belongs to the AccD/PCCB family. In terms of assembly, acetyl-CoA carboxylase is a heterohexamer composed of biotin carboxyl carrier protein (AccB), biotin carboxylase (AccC) and two subunits each of ACCase subunit alpha (AccA) and ACCase subunit beta (AccD). It depends on Zn(2+) as a cofactor.

It localises to the cytoplasm. The catalysed reaction is N(6)-carboxybiotinyl-L-lysyl-[protein] + acetyl-CoA = N(6)-biotinyl-L-lysyl-[protein] + malonyl-CoA. The protein operates within lipid metabolism; malonyl-CoA biosynthesis; malonyl-CoA from acetyl-CoA: step 1/1. Functionally, component of the acetyl coenzyme A carboxylase (ACC) complex. Biotin carboxylase (BC) catalyzes the carboxylation of biotin on its carrier protein (BCCP) and then the CO(2) group is transferred by the transcarboxylase to acetyl-CoA to form malonyl-CoA. The sequence is that of Acetyl-coenzyme A carboxylase carboxyl transferase subunit beta from Clostridium acetobutylicum (strain ATCC 824 / DSM 792 / JCM 1419 / IAM 19013 / LMG 5710 / NBRC 13948 / NRRL B-527 / VKM B-1787 / 2291 / W).